The primary structure comprises 881 residues: Alanine--tRNA ligase (881 aa).

Zn(2+) contacts are provided by H568, H572, C670, and H674.

It belongs to the class-II aminoacyl-tRNA synthetase family. The cofactor is Zn(2+).

It localises to the cytoplasm. The enzyme catalyses tRNA(Ala) + L-alanine + ATP = L-alanyl-tRNA(Ala) + AMP + diphosphate. In terms of biological role, catalyzes the attachment of alanine to tRNA(Ala) in a two-step reaction: alanine is first activated by ATP to form Ala-AMP and then transferred to the acceptor end of tRNA(Ala). Also edits incorrectly charged Ser-tRNA(Ala) and Gly-tRNA(Ala) via its editing domain. This chain is Alanine--tRNA ligase, found in Moorella thermoacetica (strain ATCC 39073 / JCM 9320).